Here is a 357-residue protein sequence, read N- to C-terminus: Protein MGF 360-8L (357 aa).

Belongs to the asfivirus MGF 360 family.

In terms of biological role, plays a role in virus cell tropism, and may be required for efficient virus replication in macrophages. This chain is Protein MGF 360-8L, found in African swine fever virus (isolate Tick/South Africa/Pretoriuskop Pr4/1996) (ASFV).